The primary structure comprises 182 residues: Sec-independent protein translocase protein TatB (182 aa).

The helical transmembrane segment at 1-21 (MFDIGFSELLLVFVIGLIVLG) threads the bilayer. 2 disordered regions span residues 88–107 (AAESMKRTYSANDPEQASDE) and 121–182 (TQHE…SDKP). Over residues 168-182 (AAPVVESSPSSSDKP) the composition is skewed to low complexity.

The protein belongs to the TatB family. As to quaternary structure, the Tat system comprises two distinct complexes: a TatABC complex, containing multiple copies of TatA, TatB and TatC subunits, and a separate TatA complex, containing only TatA subunits. Substrates initially bind to the TatABC complex, which probably triggers association of the separate TatA complex to form the active translocon.

It is found in the cell inner membrane. Its function is as follows. Part of the twin-arginine translocation (Tat) system that transports large folded proteins containing a characteristic twin-arginine motif in their signal peptide across membranes. Together with TatC, TatB is part of a receptor directly interacting with Tat signal peptides. TatB may form an oligomeric binding site that transiently accommodates folded Tat precursor proteins before their translocation. In Salmonella typhi, this protein is Sec-independent protein translocase protein TatB.